A 243-amino-acid polypeptide reads, in one-letter code: Lipid II isoglutaminyl synthase (glutamine-hydrolyzing) subunit GatD (243 aa).

In terms of domain architecture, GATase cobBQ-type spans 6–197 (IYHFMSDKLN…LHGPILPKNY (192 aa)). Cys-94 (nucleophile) is an active-site residue. Arg-128 lines the substrate pocket. Residue His-189 is part of the active site.

It belongs to the CobB/CobQ family. GatD subfamily. In terms of assembly, forms a heterodimer with MurT.

The catalysed reaction is beta-D-GlcNAc-(1-&gt;4)-Mur2Ac(oyl-L-Ala-gamma-D-Glu-L-Lys-D-Ala-D-Ala)-di-trans,octa-cis-undecaprenyl diphosphate + L-glutamine + ATP + H2O = beta-D-GlcNAc-(1-&gt;4)-Mur2Ac(oyl-L-Ala-D-isoglutaminyl-L-Lys-D-Ala-D-Ala)-di-trans,octa-cis-undecaprenyl diphosphate + L-glutamate + ADP + phosphate + H(+). It catalyses the reaction L-glutamine + H2O = L-glutamate + NH4(+). It functions in the pathway cell wall biogenesis; peptidoglycan biosynthesis. Functionally, the lipid II isoglutaminyl synthase complex catalyzes the formation of alpha-D-isoglutamine in the cell wall lipid II stem peptide. The GatD subunit catalyzes the hydrolysis of glutamine to glutamate and ammonia. The resulting ammonia molecule is channeled to the active site of MurT. The sequence is that of Lipid II isoglutaminyl synthase (glutamine-hydrolyzing) subunit GatD from Staphylococcus aureus (strain N315).